A 115-amino-acid chain; its full sequence is Large ribosomal subunit protein P2x (115 aa).

Residues 78–115 (GGGGGAASAAEPVAESKKKVEEVKDESSDDAGMMGLFD) are disordered. A compositionally biased stretch (basic and acidic residues) spans 91 to 103 (AESKKKVEEVKDE). Phosphoserine occurs at positions 104 and 105.

The protein belongs to the eukaryotic ribosomal protein P1/P2 family. P1 and P2 exist as dimers at the large ribosomal subunit.

Its function is as follows. Plays an important role in the elongation step of protein synthesis. This is Large ribosomal subunit protein P2x (RPP2C) from Arabidopsis thaliana (Mouse-ear cress).